The chain runs to 495 residues: Methyl viologen resistance protein SmvA (495 aa).

14 helical membrane passes run 5–25 (WLTL…ATVL), 44–64 (LWII…MGAL), 73–93 (LLML…FSHT), 96–116 (WLIA…PATL), 135–155 (VWAA…GILL), 158–178 (FYWG…MGLT), 192–212 (PLNL…VYSA), 220–240 (LSLW…GLFI), 260–280 (IILS…GFEL), 299–319 (VFML…GVLV), 327–347 (VATG…MTDF), 357–377 (LMAL…SAIM), 391–411 (IETM…GLLL), and 469–489 (VALS…WFSL).

Belongs to the major facilitator superfamily. TCR/Tet family.

Its subcellular location is the cell inner membrane. Its function is as follows. Major efflux pump for acriflavine and other quaternary ammonium compounds (QACs). Also required for resistance to methyl viologen. This Salmonella typhimurium (strain LT2 / SGSC1412 / ATCC 700720) protein is Methyl viologen resistance protein SmvA (smvA).